We begin with the raw amino-acid sequence, 296 residues long: 33 kDa chaperonin (296 aa).

2 cysteine pairs are disulfide-bonded: Cys-238/Cys-240 and Cys-271/Cys-274.

Belongs to the HSP33 family. Post-translationally, under oxidizing conditions two disulfide bonds are formed involving the reactive cysteines. Under reducing conditions zinc is bound to the reactive cysteines and the protein is inactive.

The protein resides in the cytoplasm. Its function is as follows. Redox regulated molecular chaperone. Protects both thermally unfolding and oxidatively damaged proteins from irreversible aggregation. Plays an important role in the bacterial defense system toward oxidative stress. This is 33 kDa chaperonin from Clostridium botulinum (strain 657 / Type Ba4).